The sequence spans 192 residues: Thymidylate kinase (192 aa).

7–14 is a binding site for ATP; the sequence is GIDCVGKS.

This sequence belongs to the thymidylate kinase family.

The enzyme catalyses dTMP + ATP = dTDP + ADP. Its function is as follows. Phosphorylation of dTMP to form dTDP in both de novo and salvage pathways of dTTP synthesis. In Campylobacter jejuni subsp. jejuni serotype O:23/36 (strain 81-176), this protein is Thymidylate kinase.